The sequence spans 390 residues: MNIHEYQGKDILRKFGVTVPKGIVAYSADEAKQAAEQLFAETGSSVVVVKAQIHAGGRGKAGGVKLAKSPEEAFEIARQMIGMTLITHQTGPEGKVVSRLLIEEGMGIEKEFYVGITLDRATSRNVLMVSTEGGMEIETVAEETPEKLLKIQIDPLFGMQGFQAREAAFFLGLEGEQFRNAVNFITALYKAYTSIDASVAEINPLVVTSEGKVIALDAKINFDDNALYRHKEYMELRDTSEEDPFEVEASKSNLNYVRLDGNVGCMVNGAGLAMGTMDIIQLAGGKPANFLDVGGTASPQTVEEGFKIILSDKNVRAILVNIFGGIVRCDRVAGGIMEAAKKMDLHLPVIVRLEGTNASIAQQMLDESGLSLIAAKGLRDAAQKVQEALA.

An ATP-grasp domain is found at 9–248 (KDILRKFGVT…TSEEDPFEVE (240 aa)). Residues K50, 57-59 (GRG), E103, M106, and E111 each bind ATP. 2 residues coordinate Mg(2+): N203 and D217. Residues N268 and 325 to 327 (GIV) each bind substrate.

It belongs to the succinate/malate CoA ligase beta subunit family. As to quaternary structure, heterotetramer of two alpha and two beta subunits. The cofactor is Mg(2+).

The enzyme catalyses succinate + ATP + CoA = succinyl-CoA + ADP + phosphate. The catalysed reaction is GTP + succinate + CoA = succinyl-CoA + GDP + phosphate. Its pathway is carbohydrate metabolism; tricarboxylic acid cycle; succinate from succinyl-CoA (ligase route): step 1/1. Succinyl-CoA synthetase functions in the citric acid cycle (TCA), coupling the hydrolysis of succinyl-CoA to the synthesis of either ATP or GTP and thus represents the only step of substrate-level phosphorylation in the TCA. The beta subunit provides nucleotide specificity of the enzyme and binds the substrate succinate, while the binding sites for coenzyme A and phosphate are found in the alpha subunit. This chain is Succinate--CoA ligase [ADP-forming] subunit beta, found in Chlorobium chlorochromatii (strain CaD3).